The chain runs to 564 residues: Keratin, type II cytoskeletal 6C (564 aa).

The span at 1-11 (MASTSTTIRSH) shows a compositional bias: low complexity. The tract at residues 1-23 (MASTSTTIRSHSSSRRGFSANSA) is disordered. Ala-2 carries the post-translational modification N-acetylalanine. The interval 2 to 162 (ASTSTTIRSH…DPAIQRVRAE (161 aa)) is head. Ser-60 bears the Phosphoserine mark. Positions 163–198 (EREQIKTLNNKFASFIDKVRFLEQQNKVLDTKWTLL) are coil 1A. The region spanning 163-476 (EREQIKTLNN…KLLEGEECRL (314 aa)) is the IF rod domain. Residues 199–217 (QEQGTKTVRQNLEPLFEQY) are linker 1. Positions 218–309 (INNLRRQLDS…ALYDAELSQM (92 aa)) are coil 1B. Residues 310–333 (QTHISDTSVVLSMDNNRNLDLDSI) are linker 12. The coil 2 stretch occupies residues 334 to 472 (IAEVKAQYEE…ATYRKLLEGE (139 aa)). The tail stretch occupies residues 473 to 564 (ECRLNGEGVG…SSSSRKSYKH (92 aa)).

Belongs to the intermediate filament family. In terms of assembly, heterodimer of a type I and a type II keratin. KRT6 isomers associate with KRT16 and/or KRT17. In terms of tissue distribution, constitutively expressed in distinct types of epithelia such as those in oral mucosa, esophagus, papillae of tongue and hair follicle outer root sheath.

The protein is Keratin, type II cytoskeletal 6C (KRT6C) of Homo sapiens (Human).